Here is a 515-residue protein sequence, read N- to C-terminus: ATP synthase subunit alpha (515 aa).

171-178 (GDRQTGKT) lines the ATP pocket.

This sequence belongs to the ATPase alpha/beta chains family. As to quaternary structure, F-type ATPases have 2 components, CF(1) - the catalytic core - and CF(0) - the membrane proton channel. CF(1) has five subunits: alpha(3), beta(3), gamma(1), delta(1), epsilon(1). CF(0) has three main subunits: a(1), b(2) and c(9-12). The alpha and beta chains form an alternating ring which encloses part of the gamma chain. CF(1) is attached to CF(0) by a central stalk formed by the gamma and epsilon chains, while a peripheral stalk is formed by the delta and b chains.

The protein localises to the cell inner membrane. The catalysed reaction is ATP + H2O + 4 H(+)(in) = ADP + phosphate + 5 H(+)(out). Functionally, produces ATP from ADP in the presence of a proton gradient across the membrane. The alpha chain is a regulatory subunit. This chain is ATP synthase subunit alpha, found in Coxiella burnetii (strain CbuK_Q154) (Coxiella burnetii (strain Q154)).